Here is a 126-residue protein sequence, read N- to C-terminus: Ribosome-binding factor A (126 aa).

It belongs to the RbfA family. In terms of assembly, monomer. Binds 30S ribosomal subunits, but not 50S ribosomal subunits or 70S ribosomes.

The protein resides in the cytoplasm. Its function is as follows. One of several proteins that assist in the late maturation steps of the functional core of the 30S ribosomal subunit. Associates with free 30S ribosomal subunits (but not with 30S subunits that are part of 70S ribosomes or polysomes). Required for efficient processing of 16S rRNA. May interact with the 5'-terminal helix region of 16S rRNA. The sequence is that of Ribosome-binding factor A from Halorhodospira halophila (strain DSM 244 / SL1) (Ectothiorhodospira halophila (strain DSM 244 / SL1)).